The chain runs to 149 residues: Transcriptional regulator MraZ (149 aa).

SpoVT-AbrB domains are found at residues 7–54 and 83–126; these read KYVN…GISH and AVQL…QPQN.

The protein belongs to the MraZ family. As to quaternary structure, forms oligomers.

The protein localises to the cytoplasm. Its subcellular location is the nucleoid. This Rickettsia rickettsii (strain Sheila Smith) protein is Transcriptional regulator MraZ.